Consider the following 233-residue polypeptide: 2-C-methyl-D-erythritol 4-phosphate cytidylyltransferase (233 aa).

It belongs to the IspD/TarI cytidylyltransferase family. IspD subfamily.

The catalysed reaction is 2-C-methyl-D-erythritol 4-phosphate + CTP + H(+) = 4-CDP-2-C-methyl-D-erythritol + diphosphate. The protein operates within isoprenoid biosynthesis; isopentenyl diphosphate biosynthesis via DXP pathway; isopentenyl diphosphate from 1-deoxy-D-xylulose 5-phosphate: step 2/6. Functionally, catalyzes the formation of 4-diphosphocytidyl-2-C-methyl-D-erythritol from CTP and 2-C-methyl-D-erythritol 4-phosphate (MEP). This is 2-C-methyl-D-erythritol 4-phosphate cytidylyltransferase from Geotalea uraniireducens (strain Rf4) (Geobacter uraniireducens).